The chain runs to 194 residues: Outer surface 22 kDa lipoprotein (194 aa).

Residues 1–21 (MYKNGFFKNYLSLFLIFLVIA) form the signal peptide. Cysteine 22 carries N-palmitoyl cysteine lipidation. Cysteine 22 is lipidated: S-diacylglycerol cysteine.

The protein resides in the cell outer membrane. In Borreliella burgdorferi (strain ZS7) (Borrelia burgdorferi), this protein is Outer surface 22 kDa lipoprotein (p22).